The sequence spans 375 residues: Cyclic AMP receptor 2 (375 aa).

Residues 1–10 (MTIMSDIIAQ) lie on the Extracellular side of the membrane. Residues 11–30 (RTILLIADFSSIIGCSLVLI) traverse the membrane as a helical segment. Residues 31–44 (GFWRLKLLRNHITK) lie on the Cytoplasmic side of the membrane. Residues 45 to 65 (IISLFCATSLFKDVISTIITL) form a helical membrane-spanning segment. Topologically, residues 66-82 (LYKPDQTESGFPCYLHA) are extracellular. The helical transmembrane segment at 83–108 (IVITFGSLACWLWTLMLSFSIYNLIV) threads the bilayer. The Cytoplasmic portion of the chain corresponds to 109–119 (RREPEPERFEK). Residues 120-138 (FYFCLCYGLPLISTIVMLS) traverse the membrane as a helical segment. The Extracellular segment spans residues 139–161 (THIIQPVGGWCWIGDNYDGYRFG). The helical transmembrane segment at 162 to 180 (LFYGPFFFIWGTSAILVGL) threads the bilayer. At 181-204 (TSKYTYSVIRSSVSDNKDKHMTYQ) the chain is on the cytoplasmic side. Ser-192 is subject to Phosphoserine. Residues 205 to 223 (FKLINYIVVFLVCWVFAIV) traverse the membrane as a helical segment. Topologically, residues 224–234 (NRILNGLNQFP) are extracellular. Residues 235–259 (TVPNVLHTYFSVSHGFYASITFIYN) form a helical membrane-spanning segment. The Cytoplasmic portion of the chain corresponds to 260–375 (NPLMWRYFGA…NNINNKNDMI (116 aa)). Residues Ser-298 and Ser-303 each carry the phosphoserine modification. A disordered region spans residues 338 to 375 (PKENENQNHHHHHHHHHHHNHYNNNNNNNNINNKNDMI). Basic residues predominate over residues 346-358 (HHHHHHHHHHHNH). A compositionally biased stretch (low complexity) spans 359–375 (YNNNNNNNNINNKNDMI).

Belongs to the G-protein coupled receptor 5 family. C-terminal Ser or Thr residues may be phosphorylated.

The protein resides in the membrane. Its function is as follows. Receptor for cAMP. Coordinates the aggregation of individual cells into a multicellular organism and regulates the expression of a large number of developmentally regulated genes. The activity of this receptor is mediated by G proteins. Plays a key role during tip formation and late development; involved in cAMP-directed patterning of pre stalk cells as they sort before and during tip formation. The protein is Cyclic AMP receptor 2 (carB) of Dictyostelium discoideum (Social amoeba).